The chain runs to 729 residues: MSGQPPPPPPQQQQQQQQLSPPPPAALAPVSGVVLPAPPAVSAGSSPAGSPGGGAGGEGLGAAAAALLLHPPPPPPPATAAPPPPPPPPPPPASAAAPASGPPAPPGLAAGPGPAGGAPTPALVAGSSAAAPFPHGDSALNEQEKELQRRLKRLYPAVDEQETPLPRSWSPKDKFSYIGLSQNNLRVHYKGHGKTPKDAASVRATHPIPAACGIYYFEVKIVSKGRDGYMGIGLSAQGVNMNRLPGWDKHSYGYHGDDGHSFCSSGTGQPYGPTFTTGDVIGCCVNLINNTCFYTKNGHSLGIAFTDLPPNLYPTVGLQTPGEVVDANFGQHPFVFDIEDYMREWRTKIQAQIDRFPIGDREGEWQTMIQKMVSSYLVHHGYCATAEAFARSTDQTVLEELASIKNRQRIQKLVLAGRMGEAIETTQQLYPSLLERNPNLLFTLKVRQFIEMVNGTDSEVRCLGGRSPKSQDSYPVSPRPFSSPSMSPSHGMNIHNLASGKGSTAHFSGFESCSNGVISNKAHQSYCHSNKHQSSNLNVPELNSINMSRSQQVNNFTSNDVDMETDHYSNGVGETSSNGFLNGSSKHDHEMEDCDTEMEVDSSQLRRQLCGGSQAAIERMIHFGRELQAMSEQLRRDCGKNTANKKMLKDAFSLLAYSDPWNSPVGNQLDPIQREPVCSALNSAILETHNLPKQPPLALAMGQATQCLGLMARSGIGSCAFATVEDYLH.

The span at 1–11 (MSGQPPPPPPQ) shows a compositional bias: pro residues. Positions 1–137 (MSGQPPPPPP…SAAAPFPHGD (137 aa)) are disordered. Positions 27 to 49 (LAPVSGVVLPAPPAVSAGSSPAG) are enriched in low complexity. Residues 50 to 60 (SPGGGAGGEGL) show a composition bias toward gly residues. Residues 70–93 (HPPPPPPPATAAPPPPPPPPPPPA) are compositionally biased toward pro residues. The span at 107–126 (GLAAGPGPAGGAPTPALVAG) shows a compositional bias: low complexity. In terms of domain architecture, B30.2/SPRY spans 147–334 (LQRRLKRLYP…VDANFGQHPF (188 aa)). Positions 365-397 (WQTMIQKMVSSYLVHHGYCATAEAFARSTDQTV) constitute a LisH domain. An interaction with CALB1 region spans residues 401–407 (LASIKNR). The CTLH domain occupies 403-460 (SIKNRQRIQKLVLAGRMGEAIETTQQLYPSLLERNPNLLFTLKVRQFIEMVNGTDSEV). The residue at position 405 (K405) is an N6-acetyllysine. The interval 461–489 (RCLGGRSPKSQDSYPVSPRPFSSPSMSPS) is disordered. Low complexity predominate over residues 473–489 (SYPVSPRPFSSPSMSPS). 2 positions are modified to phosphoserine: S477 and S487. The interval 615-729 (AAIERMIHFG…AFATVEDYLH (115 aa)) is interaction with FMR1.

Belongs to the RANBP9/10 family. Part of a complex consisting of RANBP9, MKLN1 and GID8. Identified in the CTLH complex that contains GID4, RANBP9 and/or RANBP10, MKLN1, MAEA, RMND5A (or alternatively its paralog RMND5B), GID8, ARMC8, WDR26 and YPEL5. Within this complex, MAEA, RMND5A (or alternatively its paralog RMND5B), GID8, WDR26, and RANBP9 and/or RANBP10 form the catalytic core, while GID4, MKLN1, ARMC8 and YPEL5 have ancillary roles. Interacts with GTP-bound Ran, AR, CDC2L1/p110C, CALB1, S100A7, USP11, MKLN1, SOS1 or SOS2, GID8, and FMR1. Interacts with the Dyrk kinases HIPK2, DYRK1A, and DYRK1B. Interacts with TP73 isoform Alpha but not with TP53. Interacts with the HGF receptor MET and the integrins ITGB1 and ITGB2, but not with ITGAL. Part of a complex consisting of RANBP9, RAN, DYRK1B and COPS5. Directly interacts with RANBP10. Interacts with YPEL5. Interacts with DDX4. Interacts with NGFR. Interacts with TEX19. In terms of processing, phosphorylated in response to stress. Can be phosphorylated by the cleaved p110 form of CDC2L1 (p110C). Ubiquitinated. Polyubiquitination targets the protein for rapid degradation via the ubiquitin system. Can be deubiquitinated by USP11. Ubiquitously expressed, with highest levels in testes, placenta, heart, and muscle, and lowest levels in lung. Within the brain, expressed predominantly by neurons in the gray matter of cortex, the granular layer of cerebellum and the Purkinje cells.

It localises to the cytoplasm. The protein resides in the nucleus. It is found in the cell membrane. Functionally, may act as scaffolding protein, and as adapter protein to couple membrane receptors to intracellular signaling pathways. Acts as a mediator of cell spreading and actin cytoskeleton rearrangement. Core component of the CTLH E3 ubiquitin-protein ligase complex that selectively accepts ubiquitin from UBE2H and mediates ubiquitination and subsequent proteasomal degradation of the transcription factor HBP1. May be involved in signaling of ITGB2/LFA-1 and other integrins. Enhances HGF-MET signaling by recruiting Sos and activating the Ras pathway. Enhances dihydrotestosterone-induced transactivation activity of AR, as well as dexamethasone-induced transactivation activity of NR3C1, but not affect estrogen-induced transactivation. Stabilizes TP73 isoform Alpha, probably by inhibiting its ubiquitination, and increases its proapoptotic activity. Inhibits the kinase activity of DYRK1A and DYRK1B. Inhibits FMR1 binding to RNA. In Homo sapiens (Human), this protein is Ran-binding protein 9 (RANBP9).